The chain runs to 426 residues: Serine--tRNA ligase (426 aa).

The interval 37–63 (RKSVQTRTEQLQAERNARSKSIGQAKA) is disordered. 233-235 (TAE) is an L-serine binding site. 264–266 (RSE) is an ATP binding site. E287 is an L-serine binding site. Residue 351-354 (EISS) participates in ATP binding. S387 is an L-serine binding site.

The protein belongs to the class-II aminoacyl-tRNA synthetase family. Type-1 seryl-tRNA synthetase subfamily. In terms of assembly, homodimer. The tRNA molecule binds across the dimer.

It is found in the cytoplasm. The enzyme catalyses tRNA(Ser) + L-serine + ATP = L-seryl-tRNA(Ser) + AMP + diphosphate + H(+). It carries out the reaction tRNA(Sec) + L-serine + ATP = L-seryl-tRNA(Sec) + AMP + diphosphate + H(+). It functions in the pathway aminoacyl-tRNA biosynthesis; selenocysteinyl-tRNA(Sec) biosynthesis; L-seryl-tRNA(Sec) from L-serine and tRNA(Sec): step 1/1. Functionally, catalyzes the attachment of serine to tRNA(Ser). Is also able to aminoacylate tRNA(Sec) with serine, to form the misacylated tRNA L-seryl-tRNA(Sec), which will be further converted into selenocysteinyl-tRNA(Sec). This Pseudomonas entomophila (strain L48) protein is Serine--tRNA ligase.